Reading from the N-terminus, the 81-residue chain is Photosystem I iron-sulfur center (81 aa).

4Fe-4S ferredoxin-type domains lie at 2-31 (SHTV…MVPW) and 39-68 (IASA…VRVY). C11, C14, C17, C21, C48, C51, C54, and C58 together coordinate [4Fe-4S] cluster.

As to quaternary structure, the eukaryotic PSI reaction center is composed of at least 11 subunits. [4Fe-4S] cluster serves as cofactor.

The protein resides in the plastid. It is found in the chloroplast thylakoid membrane. It carries out the reaction reduced [plastocyanin] + hnu + oxidized [2Fe-2S]-[ferredoxin] = oxidized [plastocyanin] + reduced [2Fe-2S]-[ferredoxin]. Functionally, apoprotein for the two 4Fe-4S centers FA and FB of photosystem I (PSI); essential for photochemical activity. FB is the terminal electron acceptor of PSI, donating electrons to ferredoxin. The C-terminus interacts with PsaA/B/D and helps assemble the protein into the PSI complex. Required for binding of PsaD and PsaE to PSI. PSI is a plastocyanin/cytochrome c6-ferredoxin oxidoreductase, converting photonic excitation into a charge separation, which transfers an electron from the donor P700 chlorophyll pair to the spectroscopically characterized acceptors A0, A1, FX, FA and FB in turn. This Chlorella vulgaris (Green alga) protein is Photosystem I iron-sulfur center.